A 744-amino-acid polypeptide reads, in one-letter code: MTSQPSSGKGRGRNLSIDEYNVYDDAKTYYTTEDRHHNHRAGARTRTYSQNSLFKQFERLGLQKEPYRRGSHDESTIPQSRRFLIQVEPTLQSLQSQEDTDGNMQITIEDNGPKVLSLRTAASNGYNRFDIRGTYMLSNLLQELYLAKEYGRKQIILDEARLNENPVNRLSRLIKDHFWEGLTRRIDASSIEIAARDPKDWTDDPRPRIYIPRGAPEQHEYYTKVALDRPELRLDVQYLPEKITPEIVRDMNAKPGLLAVDMEEVVDPKTGEKTLRGRPFVVPGGRFNELYGWDSYMESLGLLVNDRVDLAKSMVQNFCFCIKHYGKILNATRSYYLCRSQPPFLTDMTLRVYDKIKHEPGALEFLRQSLLAAIKEYYSVWTAEPRLDPVTGLSRYRPEGLGVPPETEAGHFIHILEPYAKKHNMSFDEFVYAYNHGEIKEPTLDDYFMHDRAVRESGHDTTYRFEGICADLATIDLNSLLFKYETDIARTIRNVFHDKFEVPDDWLATNNPAASKLETSAMWDRRAKRRKLAIDKYLWNEEAGMYFDYNTATRKQCNYESATTFWALWAGVSNPKQAAAMVTKALPKLEAFGGLLSGTKESRGEIGLERPNRQWDYPYGWAPQQILAWTGLYRYGFNEEAERLAYKWLFMITKAFVDFNGVVVEKYDVTRPIDPHRVDAEYGNQGLDFKGVAKEGFGWVNASYVYGLQIVNAHMRRALGTLTPYETFMKAVEENRNKALSELV.

Positions 99, 101, 103, 105, and 110 each coordinate Ca(2+). Substrate contacts are provided by residues arginine 286, 293-294 (WD), asparagine 330, 339-341 (RSQ), glutamate 406, arginine 455, and glycine 458. Active-site proton donor/acceptor residues include aspartate 460 and glutamate 665.

Belongs to the glycosyl hydrolase 37 family. The cofactor is Ca(2+).

Its subcellular location is the cytoplasm. The catalysed reaction is alpha,alpha-trehalose + H2O = alpha-D-glucose + beta-D-glucose. Its pathway is carbohydrate degradation. Its function is as follows. Hydrolyzes intracellular trehalose to glucose. This Neurospora crassa (strain ATCC 24698 / 74-OR23-1A / CBS 708.71 / DSM 1257 / FGSC 987) protein is Cytosolic neutral trehalase.